The following is a 99-amino-acid chain: NADH dehydrogenase [ubiquinone] 1 alpha subcomplex subunit 2 (99 aa).

N-acetylalanine is present on A2. Residues C24 and C58 are joined by a disulfide bond. Residue K64 is modified to N6-acetyllysine; alternate. K64 carries the post-translational modification N6-succinyllysine; alternate. K75 carries the N6-acetyllysine modification.

This sequence belongs to the complex I NDUFA2 subunit family. As to quaternary structure, complex I is composed of 45 different subunits.

The protein resides in the mitochondrion inner membrane. Functionally, accessory subunit of the mitochondrial membrane respiratory chain NADH dehydrogenase (Complex I), that is believed not to be involved in catalysis. Complex I functions in the transfer of electrons from NADH to the respiratory chain. The immediate electron acceptor for the enzyme is believed to be ubiquinone. The protein is NADH dehydrogenase [ubiquinone] 1 alpha subcomplex subunit 2 (NDUFA2) of Bos taurus (Bovine).